Here is a 349-residue protein sequence, read N- to C-terminus: uncharacterized protein (349 aa).

This is an uncharacterized protein from Ostreid herpesvirus 1 (isolate France) (OsHV-1).